The following is an 859-amino-acid chain: Alanine--tRNA ligase (859 aa).

Zn(2+) is bound by residues histidine 562, histidine 566, cysteine 664, and histidine 668.

This sequence belongs to the class-II aminoacyl-tRNA synthetase family. Zn(2+) is required as a cofactor.

It is found in the cytoplasm. The catalysed reaction is tRNA(Ala) + L-alanine + ATP = L-alanyl-tRNA(Ala) + AMP + diphosphate. Its function is as follows. Catalyzes the attachment of alanine to tRNA(Ala) in a two-step reaction: alanine is first activated by ATP to form Ala-AMP and then transferred to the acceptor end of tRNA(Ala). Also edits incorrectly charged Ser-tRNA(Ala) and Gly-tRNA(Ala) via its editing domain. The chain is Alanine--tRNA ligase from Aliivibrio fischeri (strain ATCC 700601 / ES114) (Vibrio fischeri).